A 182-amino-acid chain; its full sequence is Bis(5'-nucleosyl)-tetraphosphatase [asymmetrical] (182 aa).

Residues 3 to 110 (KQLYFSKFPV…IPRKKADFSE (108 aa)) form the HIT domain. Substrate-binding positions include Asn28, Gln84, and 90–93 (GQTV). A Histidine triad motif motif is present at residues 95–99 (HVHVH). His97 serves as the catalytic Tele-AMP-histidine intermediate. His99 is a binding site for substrate. Residues 135–161 (RYAGDERPPTSMRQAIPKDEDRKPRTL) are disordered. Residues 150–161 (IPKDEDRKPRTL) are compositionally biased toward basic and acidic residues.

The catalysed reaction is P(1),P(4)-bis(5'-guanosyl) tetraphosphate + H2O = GMP + GTP + 2 H(+). Functionally, asymmetrically hydrolyzes Ap4A to yield AMP and ATP. The polypeptide is Bis(5'-nucleosyl)-tetraphosphatase [asymmetrical] (aph1) (Schizosaccharomyces pombe (strain 972 / ATCC 24843) (Fission yeast)).